Here is a 317-residue protein sequence, read N- to C-terminus: MKI67 FHA domain-interacting nucleolar phosphoprotein (317 aa).

Ala2 is subject to N-acetylalanine. A Glycyl lysine isopeptide (Lys-Gly) (interchain with G-Cter in SUMO2) cross-link involves residue Lys40. The RRM domain occupies 47 to 125 (GVVYLGHLPS…RLLSCKFMPR (79 aa)). Arg116 carries the omega-N-methylarginine modification. Residues Lys181 and Lys194 each participate in a glycyl lysine isopeptide (Lys-Gly) (interchain with G-Cter in SUMO2) cross-link. Arg203 is modified (citrulline). The disordered stretch occupies residues 203 to 317 (RDSEGNQVLP…KRPRKRKSKQ (115 aa)). A compositionally biased stretch (basic and acidic residues) spans 213–233 (DQKEGLSGEPRRKEKMMKEDI). At Ser219 the chain carries Phosphoserine. Positions 238–248 (PKKRKRSRRKK) are enriched in basic residues. At Ser253 the chain carries Phosphoserine. Phosphothreonine is present on residues Thr257 and Thr261. Residues 265-284 (LERRKSQVMEVGGDKDDEII) are compositionally biased toward basic and acidic residues. 2 positions are modified to omega-N-methylated arginine: Arg267 and Arg268. At Ser270 the chain carries Phosphoserine. Lys293 participates in a covalent cross-link: Glycyl lysine isopeptide (Lys-Gly) (interchain with G-Cter in SUMO1); alternate. Lys293 participates in a covalent cross-link: Glycyl lysine isopeptide (Lys-Gly) (interchain with G-Cter in SUMO2); alternate. A Phosphothreonine modification is found at Thr301. Basic residues predominate over residues 308–317 (KRPRKRKSKQ).

In terms of assembly, binds to the FHA domain of MKI67; this interaction is enhanced in mitosis. In terms of processing, phosphorylated. Post-translationally, citrullinated by PADI4. Expressed in brain, heart, hind limb muscles, intestine, liver, skin and spleen.

The protein localises to the nucleus. It localises to the nucleolus. The protein resides in the chromosome. The polypeptide is MKI67 FHA domain-interacting nucleolar phosphoprotein (Nifk) (Mus musculus (Mouse)).